Consider the following 208-residue polypeptide: High frequency lysogenization protein HflD homolog (208 aa).

This sequence belongs to the HflD family.

Its subcellular location is the cytoplasm. It is found in the cell inner membrane. This Yersinia pestis bv. Antiqua (strain Nepal516) protein is High frequency lysogenization protein HflD homolog.